The primary structure comprises 160 residues: Endoribonuclease YbeY (160 aa).

3 residues coordinate Zn(2+): H127, H131, and H137.

It belongs to the endoribonuclease YbeY family. Requires Zn(2+) as cofactor.

Its subcellular location is the cytoplasm. Functionally, single strand-specific metallo-endoribonuclease involved in late-stage 70S ribosome quality control and in maturation of the 3' terminus of the 16S rRNA. The polypeptide is Endoribonuclease YbeY (Synechococcus sp. (strain RCC307)).